Here is a 121-residue protein sequence, read N- to C-terminus: Small ribosomal subunit protein uS13 (121 aa).

The tract at residues 94-121 (GLPMRGQRTRTNARTRKGPRKGAAALKK) is disordered.

This sequence belongs to the universal ribosomal protein uS13 family. In terms of assembly, part of the 30S ribosomal subunit. Forms a loose heterodimer with protein S19. Forms two bridges to the 50S subunit in the 70S ribosome.

Its function is as follows. Located at the top of the head of the 30S subunit, it contacts several helices of the 16S rRNA. In the 70S ribosome it contacts the 23S rRNA (bridge B1a) and protein L5 of the 50S subunit (bridge B1b), connecting the 2 subunits; these bridges are implicated in subunit movement. Contacts the tRNAs in the A and P-sites. In Delftia acidovorans (strain DSM 14801 / SPH-1), this protein is Small ribosomal subunit protein uS13.